A 353-amino-acid chain; its full sequence is Paraneoplastic antigen Ma1 homolog (353 aa).

Belongs to the PNMA family.

The protein resides in the nucleus. It localises to the nucleolus. This Bos taurus (Bovine) protein is Paraneoplastic antigen Ma1 homolog (PNMA1).